The sequence spans 320 residues: Sensor histidine kinase YbdK (320 aa).

Residues Met1–Met21 form a helical membrane-spanning segment. Topologically, residues Ser22–Ser41 are extracellular. Residues Phe42–Phe62 form a helical membrane-spanning segment. Over Ser63–Glu320 the chain is Cytoplasmic. An HAMP domain is found at His67 to Leu120. Residues Lys135 to Glu320 enclose the Histidine kinase domain. His138 is subject to Phosphohistidine; by autocatalysis.

It is found in the cell membrane. It carries out the reaction ATP + protein L-histidine = ADP + protein N-phospho-L-histidine.. Functionally, member of the two-component regulatory system YbdK/YbdJ. Probably activates YbdJ by phosphorylation. This chain is Sensor histidine kinase YbdK (ybdK), found in Bacillus subtilis (strain 168).